The following is a 127-amino-acid chain: Small ribosomal subunit protein bS6 (127 aa).

Residues 102–127 (IMQGAEKGKSSRKEKVDAEAEASEEA) form a disordered region. Residues 107–119 (EKGKSSRKEKVDA) are compositionally biased toward basic and acidic residues.

Belongs to the bacterial ribosomal protein bS6 family.

Its function is as follows. Binds together with bS18 to 16S ribosomal RNA. The chain is Small ribosomal subunit protein bS6 from Coxiella burnetii (strain CbuK_Q154) (Coxiella burnetii (strain Q154)).